Reading from the N-terminus, the 468-residue chain is Hepatocyte nuclear factor 3-alpha (468 aa).

The fork-head DNA-binding region spans 169 to 260 (AKPPYSYISL…GNMFENGCYL (92 aa)). The essential for DNA binding stretch occupies residues 251-288 (GNMFENGCYLRRQKRFKCEKQPGAGGGSGGGGSKGGPE). Positions 269–396 (EKQPGAGGGS…DPHYSFNHPF (128 aa)) are disordered. Gly residues predominate over residues 273–285 (GAGGGSGGGGSKG). Residues serine 303 and serine 327 each carry the phosphoserine modification. Composition is skewed to low complexity over residues 318–328 (GAPAPGPAASP) and 347–365 (SPASSSAPPISSGPGALAS).

Binds DNA as a monomer. Interacts with FOXA2. Interacts with NKX2-1. Interacts with HDAC7. Interacts with the histone H3-H4 heterodimer. Associates with nucleosomes containing histone H2A. Interacts with AR. Interacts with NR0B2. As to expression, restricted mainly to endoderm-derived tissues (lung, liver, stomach, and small intestine). Expressed in the prostate.

The protein localises to the nucleus. Functionally, transcription factor that is involved in embryonic development, establishment of tissue-specific gene expression and regulation of gene expression in differentiated tissues. Is thought to act as a 'pioneer' factor opening the compacted chromatin for other proteins through interactions with nucleosomal core histones and thereby replacing linker histones at target enhancer and/or promoter sites. Binds DNA with the consensus sequence 5'-[AC]A[AT]T[AG]TT[GT][AG][CT]T[CT]-3'. Proposed to play a role in translating the epigenetic signatures into cell type-specific enhancer-driven transcriptional programs. Involved in the development of multiple endoderm-derived organ systems such as the liver, pancreas, lungs and prostate; FOXA1 and FOXA2 seem to have at least in part redundant roles. Plays a role in prostate morphogenesis and epithelial cell differentiation. FOXA1 and FOXA2 are essential for hepatic specification. FOXA1 and FOXA2 are required for morphogenesis and cell differentiation during formation of the lung. FOXA1 and FOXA2 are involved in bile duct formation; they positively regulate the binding of glucocorticoid receptor/NR3C1 to the IL6 promoter. FOXA1 and FOXA2 regulate multiple phases of midbrain dopaminergic neuron development; they regulate expression of NEUROG2 at the beginning of mDA neurogenesis and of NR4A2 and EN1 in immature mDA neurons. Modulates the transcriptional activity of nuclear hormone receptors. Is involved in ESR1-mediated transcription. Inhibits NKX2-1-mediated transcription from the SFTPC promoter in lung epithel independently from DNA-binding. Involved in regulation of apoptosis. Involved in cell cycle regulation. Originally described as a transcription activator for a number of liver genes such as AFP, albumin, tyrosine aminotransferase, PEPCK, etc. Interacts with the cis-acting regulatory regions of these genes. Involved in glucose homeostasis; activates the GCG promoter. The protein is Hepatocyte nuclear factor 3-alpha (Foxa1) of Mus musculus (Mouse).